The chain runs to 447 residues: Argininosuccinate synthase (447 aa).

ATP-binding positions include 17 to 25 (AFSGGLDTS) and Ala-43. Tyr-99 contributes to the L-citrulline binding site. Residues Gly-129 and Thr-131 each contribute to the ATP site. L-aspartate contacts are provided by Thr-131, Asn-135, and Asp-136. L-citrulline is bound at residue Asn-135. Residue Asp-136 coordinates ATP. 2 residues coordinate L-citrulline: Arg-139 and Ser-192. Residue Asp-194 participates in ATP binding. Residues Thr-201, Glu-203, and Glu-280 each contribute to the L-citrulline site.

Belongs to the argininosuccinate synthase family. Type 2 subfamily. As to quaternary structure, homotetramer.

It localises to the cytoplasm. The catalysed reaction is L-citrulline + L-aspartate + ATP = 2-(N(omega)-L-arginino)succinate + AMP + diphosphate + H(+). The protein operates within amino-acid biosynthesis; L-arginine biosynthesis; L-arginine from L-ornithine and carbamoyl phosphate: step 2/3. This chain is Argininosuccinate synthase, found in Shigella boydii serotype 18 (strain CDC 3083-94 / BS512).